Consider the following 448-residue polypeptide: uncharacterized protein (448 aa).

Residues Met1–Lys50 lie on the Extracellular side of the membrane. Residues Ile51–Trp71 form a helical membrane-spanning segment. The Cytoplasmic segment spans residues Tyr72–Gly93. Residues Leu94–Ile114 form a helical membrane-spanning segment. Over Ser115 to Ala146 the chain is Extracellular. A helical membrane pass occupies residues Ile147–Val167. The Cytoplasmic portion of the chain corresponds to Asp168–Lys184. A helical membrane pass occupies residues Leu185–Ser205. Topologically, residues Asp206–Lys260 are extracellular. A helical membrane pass occupies residues Leu261–Val281. Residues Tyr282–Gln287 lie on the Cytoplasmic side of the membrane. The chain crosses the membrane as a helical span at residues Phe288–Ser308. Residues Ser309 to Ser333 are Extracellular-facing. A helical transmembrane segment spans residues Gly334 to Leu354. Over Asn355–Gly386 the chain is Cytoplasmic. Gly386 to Thr393 lines the ATP pocket. A helical membrane pass occupies residues Val387 to Ala407. Topologically, residues Asn408 to Tyr416 are extracellular. A helical transmembrane segment spans residues Ile417–Val437. At Asp438–His448 the chain is on the cytoplasmic side.

The protein localises to the membrane. This is an uncharacterized protein from Saccharomyces cerevisiae (strain ATCC 204508 / S288c) (Baker's yeast).